We begin with the raw amino-acid sequence, 359 residues long: Histamine H2 receptor (359 aa).

At 1–22 the chain is on the extracellular side; that stretch reads MISNGTGSSFCLDSPPCRITVS. Asparagine 4 carries N-linked (GlcNAc...) asparagine glycosylation. The helical transmembrane segment at 23–44 threads the bilayer; the sequence is VVLTVLILITIAGNVVVCLAVG. Residues 45 to 57 are Cytoplasmic-facing; the sequence is LNRRLRSLTNCFI. A helical transmembrane segment spans residues 58–81; sequence VSLAITDLLLGLLVLPFSAFYQLS. Over 82–92 the chain is Extracellular; it reads CRWSFGKVFCN. Cysteine 91 and cysteine 174 form a disulfide bridge. A helical membrane pass occupies residues 93 to 114; the sequence is IYTSLDVMLCTASILNLFMISL. The Cytoplasmic portion of the chain corresponds to 115-134; sequence DRYCAVTDPLRYPVLITPVR. Residues 135–159 form a helical membrane-spanning segment; that stretch reads VAVSLVLIWVISITLSFLSIHLGWN. At 160 to 180 the chain is on the extracellular side; the sequence is SRNETSSFNHTIPKCKVQVNL. Residues 181–204 traverse the membrane as a helical segment; it reads VYGLVDGLVTFYLPLLVMCITYYR. Topologically, residues 205–234 are cytoplasmic; that stretch reads IFKIARDQAKRIHHMGSWKAATIGEHKATV. The chain crosses the membrane as a helical span at residues 235–258; it reads TLAAVMGAFIICWFPYFTVFVYRG. Residues 259 to 267 lie on the Extracellular side of the membrane; sequence LKGDDAINE. The chain crosses the membrane as a helical span at residues 268-289; that stretch reads AFEAVVLWLGYANSALNPILYA. The Cytoplasmic segment spans residues 290-359; it reads TLNRDFRTAY…VTAPRGATDR (70 aa). Residue cysteine 305 is the site of S-palmitoyl cysteine attachment. The segment covering 310–327 has biased composition (polar residues); sequence HNAQETSLRSNSSQLARN. The disordered stretch occupies residues 310–359; sequence HNAQETSLRSNSSQLARNQSREPMRQEEKPLKLQVWSGTEVTAPRGATDR. Residues 328 to 340 show a composition bias toward basic and acidic residues; it reads QSREPMRQEEKPL.

It belongs to the G-protein coupled receptor 1 family. As to expression, gastric fundus and, to a lesser extent, in brain.

It is found in the cell membrane. The H2 subclass of histamine receptors mediates gastric acid secretion. The activity of this receptor is mediated by G proteins which activate adenylyl cyclase. This Canis lupus familiaris (Dog) protein is Histamine H2 receptor (HRH2).